The sequence spans 92 residues: Small ribosomal subunit protein uS19c (92 aa).

The protein belongs to the universal ribosomal protein uS19 family.

The protein resides in the plastid. It localises to the chloroplast. In terms of biological role, protein S19 forms a complex with S13 that binds strongly to the 16S ribosomal RNA. This chain is Small ribosomal subunit protein uS19c, found in Piper cenocladum (Ant piper).